The chain runs to 194 residues: Threonylcarbamoyl-AMP synthase (194 aa).

Positions Ser12–Glu194 constitute a YrdC-like domain.

It belongs to the SUA5 family. TsaC subfamily.

It is found in the cytoplasm. It catalyses the reaction L-threonine + hydrogencarbonate + ATP = L-threonylcarbamoyladenylate + diphosphate + H2O. Functionally, required for the formation of a threonylcarbamoyl group on adenosine at position 37 (t(6)A37) in tRNAs that read codons beginning with adenine. Catalyzes the conversion of L-threonine, HCO(3)(-)/CO(2) and ATP to give threonylcarbamoyl-AMP (TC-AMP) as the acyladenylate intermediate, with the release of diphosphate. In Blochmanniella pennsylvanica (strain BPEN), this protein is Threonylcarbamoyl-AMP synthase.